Consider the following 208-residue polypeptide: Thymidylate kinase (208 aa).

ATP is bound at residue 10-17 (GPEGSGKT).

This sequence belongs to the thymidylate kinase family.

It carries out the reaction dTMP + ATP = dTDP + ADP. Its function is as follows. Phosphorylation of dTMP to form dTDP in both de novo and salvage pathways of dTTP synthesis. The sequence is that of Thymidylate kinase from Bacillus cereus (strain B4264).